A 337-amino-acid chain; its full sequence is Neurogenic differentiation factor 6 (337 aa).

A disordered region spans residues 28 to 80; the sequence is QKQIKKPESFPKQVVLRGKSIKRAPGEETEKEEEEEDREEEDENGLSRRRGLR. Acidic residues predominate over residues 54–71; it reads EETEKEEEEEDREEEDEN. Residues 80–86 carry the Nuclear localization signal motif; it reads RKKKTTK. The region spanning 94 to 146 is the bHLH domain; it reads FRRQEANARERNRMHGLNDALDNLRKVVPCYSKTQKLSKIETLRLAKNYIWAL.

Efficient DNA binding requires dimerization with another bHLH protein. Specific to the nervous system of both embryos and adults. Highest levels in the cortical plate of the cerebrum.

It localises to the nucleus. Functionally, activates E box-dependent transcription in collaboration with TCF3/E47. May be a trans-acting factor involved in the development and maintenance of the mammalian nervous system. Transactivates the promoter of its own gene. The sequence is that of Neurogenic differentiation factor 6 (Neurod6) from Mus musculus (Mouse).